The sequence spans 125 residues: Small ribosomal subunit protein uS13 (125 aa).

The segment at 93–125 is disordered; sequence RSLPVRGQRTRTNARTRKGKRKTVAGKKKAGKK.

It belongs to the universal ribosomal protein uS13 family. In terms of assembly, part of the 30S ribosomal subunit. Forms a loose heterodimer with protein S19. Forms two bridges to the 50S subunit in the 70S ribosome.

Located at the top of the head of the 30S subunit, it contacts several helices of the 16S rRNA. In the 70S ribosome it contacts the 23S rRNA (bridge B1a) and protein L5 of the 50S subunit (bridge B1b), connecting the 2 subunits; these bridges are implicated in subunit movement. Contacts the tRNAs in the A and P-sites. The polypeptide is Small ribosomal subunit protein uS13 (Chlorobaculum tepidum (strain ATCC 49652 / DSM 12025 / NBRC 103806 / TLS) (Chlorobium tepidum)).